An 804-amino-acid chain; its full sequence is Probable exo-1,4-beta-xylosidase xlnD (804 aa).

Residues 1-26 form the signal peptide; it reads MAHSMSRPVAATAAALLALALPQALA. N-linked (GlcNAc...) asparagine glycosylation is found at Asn29, Asn124, Asn148, Asn242, and Asn251. Residue Asp315 is part of the active site. Asn357, Asn390, Asn413, Asn444, Asn455, Asn573, Asn576, Asn665, Asn696, and Asn718 each carry an N-linked (GlcNAc...) asparagine glycan.

It belongs to the glycosyl hydrolase 3 family.

Its subcellular location is the secreted. The catalysed reaction is Hydrolysis of (1-&gt;4)-beta-D-xylans, to remove successive D-xylose residues from the non-reducing termini.. The protein operates within glycan degradation; xylan degradation. Xylan 1,4-beta-xylosidase involved in the hydrolysis of xylan, a major structural heterogeneous polysaccharide found in plant biomass representing the second most abundant polysaccharide in the biosphere, after cellulose. In Aspergillus niger (strain ATCC MYA-4892 / CBS 513.88 / FGSC A1513), this protein is Probable exo-1,4-beta-xylosidase xlnD (xlnD).